Reading from the N-terminus, the 251-residue chain is Small ribosomal subunit protein uS4c (251 aa).

S4 RNA-binding domains follow at residues 110–170 and 189–251; these read MRLD…KLVN and RTLA…QFSE.

This sequence belongs to the universal ribosomal protein uS4 family. In terms of assembly, part of the 30S ribosomal subunit. Contacts protein S5. The interaction surface between S4 and S5 is involved in control of translational fidelity.

It localises to the plastid. The protein localises to the chloroplast. Its function is as follows. One of the primary rRNA binding proteins, it binds directly to 16S rRNA where it nucleates assembly of the body of the 30S subunit. Functionally, with S5 and S12 plays an important role in translational accuracy. The protein is Small ribosomal subunit protein uS4c (rps4) of Tetradesmus obliquus (Green alga).